The following is a 391-amino-acid chain: Multidrug resistance protein MdtL (391 aa).

12 helical membrane passes run Phe4–Val24, Ile42–Ala62, Pro69–Glu89, Leu93–Phe113, Leu131–Met151, Ser158–Leu178, Phe203–Val222, Ala245–Phe265, Thr269–Pro289, Val293–Met313, Leu331–Ile351, and Met356–Ala376.

Belongs to the major facilitator superfamily. DHA1 family. MdtL (TC 2.A.1.2.22) subfamily.

Its subcellular location is the cell inner membrane. In terms of biological role, confers resistance to chloramphenicol. The sequence is that of Multidrug resistance protein MdtL from Escherichia coli O45:K1 (strain S88 / ExPEC).